We begin with the raw amino-acid sequence, 238 residues long: 1-(5-phosphoribosyl)-5-[(5-phosphoribosylamino)methylideneamino] imidazole-4-carboxamide isomerase (238 aa).

The active-site Proton acceptor is D8. Catalysis depends on D129, which acts as the Proton donor.

The protein belongs to the HisA/HisF family.

It localises to the cytoplasm. It carries out the reaction 1-(5-phospho-beta-D-ribosyl)-5-[(5-phospho-beta-D-ribosylamino)methylideneamino]imidazole-4-carboxamide = 5-[(5-phospho-1-deoxy-D-ribulos-1-ylimino)methylamino]-1-(5-phospho-beta-D-ribosyl)imidazole-4-carboxamide. It participates in amino-acid biosynthesis; L-histidine biosynthesis; L-histidine from 5-phospho-alpha-D-ribose 1-diphosphate: step 4/9. In Jannaschia sp. (strain CCS1), this protein is 1-(5-phosphoribosyl)-5-[(5-phosphoribosylamino)methylideneamino] imidazole-4-carboxamide isomerase.